The following is a 336-amino-acid chain: tRNA N6-adenosine threonylcarbamoyltransferase (336 aa).

The Fe cation site is built by His-115 and His-119. Residues 137–141, Asp-170, Gly-183, Asp-187, and Asn-276 each bind substrate; that span reads LVSGG. Residue Asp-302 participates in Fe cation binding.

It belongs to the KAE1 / TsaD family. Fe(2+) is required as a cofactor.

It is found in the cytoplasm. It catalyses the reaction L-threonylcarbamoyladenylate + adenosine(37) in tRNA = N(6)-L-threonylcarbamoyladenosine(37) in tRNA + AMP + H(+). In terms of biological role, required for the formation of a threonylcarbamoyl group on adenosine at position 37 (t(6)A37) in tRNAs that read codons beginning with adenine. Is involved in the transfer of the threonylcarbamoyl moiety of threonylcarbamoyl-AMP (TC-AMP) to the N6 group of A37, together with TsaE and TsaB. TsaD likely plays a direct catalytic role in this reaction. The polypeptide is tRNA N6-adenosine threonylcarbamoyltransferase (Streptococcus suis (strain 98HAH33)).